A 379-amino-acid chain; its full sequence is Synaptic vesicle membrane protein VAT-1 (379 aa).

Ser-273 carries the phosphoserine modification.

This sequence belongs to the zinc-containing alcohol dehydrogenase family. Quinone oxidoreductase subfamily. As to expression, cholinergic synaptic vesicles.

It localises to the cytoplasmic vesicle. The protein resides in the secretory vesicle. The protein localises to the synaptic vesicle membrane. Its function is as follows. May play a central role in the functions mediated by specific classes of synaptic vesicles. The protein is Synaptic vesicle membrane protein VAT-1 of Tetronarce californica (Pacific electric ray).